Consider the following 208-residue polypeptide: MSGKKIVSKTTTVGIVVGDYVVLAADKRATAGSLVAHKRVKKIIRIDDYIAMTISGLVADAEIIAEQARFIARKYKLELGRPIKVSALASNLSIILNAYLRMSPYIVQLLLGGYDDNGPHLFYIDLFGSLSEEKYMATGSGSPTAFGVLEEEYRSDLSLDEAKELAFKAVSAATKRDGFSGEGVDIVVIGPNTYVEETKLFKRSIIAK.

Residues 1-9 constitute a propeptide, removed in mature form; by autocatalysis; it reads MSGKKIVSK. T10 serves as the catalytic Nucleophile.

Belongs to the peptidase T1B family. The 20S proteasome core is composed of 14 alpha and 14 beta subunits that assemble into four stacked heptameric rings, resulting in a barrel-shaped structure. The two inner rings, each composed of seven catalytic beta subunits, are sandwiched by two outer rings, each composed of seven alpha subunits. The catalytic chamber with the active sites is on the inside of the barrel. Has a gated structure, the ends of the cylinder being occluded by the N-termini of the alpha-subunits. Is capped at one or both ends by the proteasome regulatory ATPase, PAN.

The protein localises to the cytoplasm. The catalysed reaction is Cleavage of peptide bonds with very broad specificity.. Its activity is regulated as follows. The formation of the proteasomal ATPase PAN-20S proteasome complex, via the docking of the C-termini of PAN into the intersubunit pockets in the alpha-rings, triggers opening of the gate for substrate entry. Interconversion between the open-gate and close-gate conformations leads to a dynamic regulation of the 20S proteasome proteolysis activity. Functionally, component of the proteasome core, a large protease complex with broad specificity involved in protein degradation. This is Proteasome subunit beta 2 from Staphylothermus marinus (strain ATCC 43588 / DSM 3639 / JCM 9404 / F1).